Here is a 444-residue protein sequence, read N- to C-terminus: Phosphoglucosamine mutase (444 aa).

Ser-101 acts as the Phosphoserine intermediate in catalysis. Mg(2+)-binding residues include Ser-101, Asp-239, Asp-241, and Asp-243. Ser-101 is modified (phosphoserine).

The protein belongs to the phosphohexose mutase family. Mg(2+) serves as cofactor. In terms of processing, activated by phosphorylation.

The catalysed reaction is alpha-D-glucosamine 1-phosphate = D-glucosamine 6-phosphate. Its function is as follows. Catalyzes the conversion of glucosamine-6-phosphate to glucosamine-1-phosphate. This is Phosphoglucosamine mutase from Alcanivorax borkumensis (strain ATCC 700651 / DSM 11573 / NCIMB 13689 / SK2).